Consider the following 176-residue polypeptide: Crossover junction endodeoxyribonuclease RuvC (176 aa).

Residues Asp-8, Glu-69, and Asp-141 contribute to the active site. Residues Asp-8, Glu-69, and Asp-141 each contribute to the Mg(2+) site.

It belongs to the RuvC family. As to quaternary structure, homodimer which binds Holliday junction (HJ) DNA. The HJ becomes 2-fold symmetrical on binding to RuvC with unstacked arms; it has a different conformation from HJ DNA in complex with RuvA. In the full resolvosome a probable DNA-RuvA(4)-RuvB(12)-RuvC(2) complex forms which resolves the HJ. Mg(2+) is required as a cofactor.

The protein resides in the cytoplasm. It carries out the reaction Endonucleolytic cleavage at a junction such as a reciprocal single-stranded crossover between two homologous DNA duplexes (Holliday junction).. In terms of biological role, the RuvA-RuvB-RuvC complex processes Holliday junction (HJ) DNA during genetic recombination and DNA repair. Endonuclease that resolves HJ intermediates. Cleaves cruciform DNA by making single-stranded nicks across the HJ at symmetrical positions within the homologous arms, yielding a 5'-phosphate and a 3'-hydroxyl group; requires a central core of homology in the junction. The consensus cleavage sequence is 5'-(A/T)TT(C/G)-3'. Cleavage occurs on the 3'-side of the TT dinucleotide at the point of strand exchange. HJ branch migration catalyzed by RuvA-RuvB allows RuvC to scan DNA until it finds its consensus sequence, where it cleaves and resolves the cruciform DNA. The chain is Crossover junction endodeoxyribonuclease RuvC from Pseudomonas syringae pv. tomato (strain ATCC BAA-871 / DC3000).